The chain runs to 84 residues: Large ribosomal subunit protein bL31B (84 aa).

Belongs to the bacterial ribosomal protein bL31 family. Type B subfamily. As to quaternary structure, part of the 50S ribosomal subunit.

The sequence is that of Large ribosomal subunit protein bL31B from Acinetobacter baumannii (strain AB307-0294).